Reading from the N-terminus, the 352-residue chain is N-acetyl-gamma-glutamyl-phosphate reductase (352 aa).

Cys158 is a catalytic residue.

Belongs to the NAGSA dehydrogenase family. Type 1 subfamily.

Its subcellular location is the cytoplasm. It catalyses the reaction N-acetyl-L-glutamate 5-semialdehyde + phosphate + NADP(+) = N-acetyl-L-glutamyl 5-phosphate + NADPH + H(+). Its pathway is amino-acid biosynthesis; L-arginine biosynthesis; N(2)-acetyl-L-ornithine from L-glutamate: step 3/4. Catalyzes the NADPH-dependent reduction of N-acetyl-5-glutamyl phosphate to yield N-acetyl-L-glutamate 5-semialdehyde. The chain is N-acetyl-gamma-glutamyl-phosphate reductase from Mycobacterium bovis (strain BCG / Tokyo 172 / ATCC 35737 / TMC 1019).